Here is a 436-residue protein sequence, read N- to C-terminus: Histidinol dehydrogenase (436 aa).

Residues Ser237, Gln259, and His262 each contribute to the substrate site. Zn(2+)-binding residues include Gln259 and His262. Catalysis depends on proton acceptor residues Glu327 and His328. His328, Asp361, Glu415, and His420 together coordinate substrate. Asp361 contacts Zn(2+). Position 420 (His420) interacts with Zn(2+).

It belongs to the histidinol dehydrogenase family. Requires Zn(2+) as cofactor.

The catalysed reaction is L-histidinol + 2 NAD(+) + H2O = L-histidine + 2 NADH + 3 H(+). It functions in the pathway amino-acid biosynthesis; L-histidine biosynthesis; L-histidine from 5-phospho-alpha-D-ribose 1-diphosphate: step 9/9. Functionally, catalyzes the sequential NAD-dependent oxidations of L-histidinol to L-histidinaldehyde and then to L-histidine. In Helicobacter hepaticus (strain ATCC 51449 / 3B1), this protein is Histidinol dehydrogenase.